The following is a 759-amino-acid chain: Xaa-Pro dipeptidyl-peptidase (759 aa).

Catalysis depends on charge relay system residues serine 347, aspartate 467, and histidine 497.

The protein belongs to the peptidase S15 family. In terms of assembly, homodimer.

Its subcellular location is the secreted. The enzyme catalyses Hydrolyzes Xaa-Pro-|- bonds to release unblocked, N-terminal dipeptides from substrates including Ala-Pro-|-p-nitroanilide and (sequentially) Tyr-Pro-|-Phe-Pro-|-Gly-Pro-|-Ile.. Removes N-terminal dipeptides sequentially from polypeptides having unsubstituted N-termini provided that the penultimate residue is proline. The protein is Xaa-Pro dipeptidyl-peptidase (pepX) of Streptococcus gordonii.